The chain runs to 189 residues: Probable nicotinate-nucleotide adenylyltransferase (189 aa).

It belongs to the NadD family.

The catalysed reaction is nicotinate beta-D-ribonucleotide + ATP + H(+) = deamido-NAD(+) + diphosphate. It functions in the pathway cofactor biosynthesis; NAD(+) biosynthesis; deamido-NAD(+) from nicotinate D-ribonucleotide: step 1/1. Functionally, catalyzes the reversible adenylation of nicotinate mononucleotide (NaMN) to nicotinic acid adenine dinucleotide (NaAD). The polypeptide is Probable nicotinate-nucleotide adenylyltransferase (Caulobacter sp. (strain K31)).